The following is a 476-amino-acid chain: Adenylosuccinate synthetase, chloroplastic (476 aa).

Residues 1–20 are compositionally biased toward low complexity; that stretch reads AAAAAGRGRSFSPAAPAPSS. Positions 1 to 34 are disordered; it reads AAAAAGRGRSFSPAAPAPSSVRLPGRQAPAPAAA. GTP contacts are provided by residues 63 to 69 and 91 to 93; these read GDEGKGK and GHT. Residue aspartate 64 is the Proton acceptor of the active site. 2 residues coordinate Mg(2+): aspartate 64 and glycine 91. Residues 64–67, 89–92, threonine 181, arginine 195, glutamine 275, threonine 290, and arginine 354 contribute to the IMP site; these read DEGK and NAGH. Histidine 92 functions as the Proton donor in the catalytic mechanism. Substrate is bound at residue 350 to 356; sequence TTTGRPR. Residues arginine 356, 382–384, and 465–467 each bind GTP; these read KLD and GVG.

It belongs to the adenylosuccinate synthetase family. In terms of assembly, homodimer. Mg(2+) is required as a cofactor.

The protein resides in the plastid. Its subcellular location is the chloroplast. The catalysed reaction is IMP + L-aspartate + GTP = N(6)-(1,2-dicarboxyethyl)-AMP + GDP + phosphate + 2 H(+). The protein operates within purine metabolism; AMP biosynthesis via de novo pathway; AMP from IMP: step 1/2. In terms of biological role, plays an important role in the de novo pathway and in the salvage pathway of purine nucleotide biosynthesis. Catalyzes the first committed step in the biosynthesis of AMP from IMP. The sequence is that of Adenylosuccinate synthetase, chloroplastic from Triticum aestivum (Wheat).